The sequence spans 109 residues: Iron-sulfur cluster assembly protein CyaY (109 aa).

This sequence belongs to the frataxin family.

Its function is as follows. Involved in iron-sulfur (Fe-S) cluster assembly. May act as a regulator of Fe-S biogenesis. The chain is Iron-sulfur cluster assembly protein CyaY from Bordetella petrii (strain ATCC BAA-461 / DSM 12804 / CCUG 43448).